The sequence spans 597 residues: Ribosomal oxygenase 1 (597 aa).

M1 is modified (N-acetylmethionine). A disordered region spans residues 1 to 138 (MDELPNGNGA…HVDDPERPWD (138 aa)). 2 stretches are compositionally biased toward basic residues: residues 14-24 (KRGRGRRRRQP) and 37-48 (RPRKVRRHRKSA). Residues 49–62 (ASRVAALRARALLS) are compositionally biased toward low complexity. A phosphoserine mark is found at S62 and S65. Over residues 72–81 (VRGKRERPAE) the composition is skewed to basic and acidic residues. A Phosphoserine modification is found at S86. The JmjC domain maps to 250–395 (CSLRLLCPQA…DFLEAVLPLA (146 aa)). Positions 296, 298, and 361 each coordinate Fe cation.

The protein belongs to the ROX family. NO66 subfamily. Interacts with SP7/OSX; the interaction is direct. Interacts with MYC. Interacts with PHF19; leading to its recruitment to H3K36me3 sites. The cofactor is Fe(2+).

The protein localises to the nucleus. It localises to the nucleolus. Its subcellular location is the nucleoplasm. It catalyses the reaction N(6),N(6)-dimethyl-L-lysyl(36)-[histone H3] + 2 2-oxoglutarate + 2 O2 = L-lysyl(36)-[histone H3] + 2 formaldehyde + 2 succinate + 2 CO2. The enzyme catalyses N(6)-methyl-L-lysyl-[protein] + 2-oxoglutarate + O2 = L-lysyl-[protein] + formaldehyde + succinate + CO2. It carries out the reaction L-histidyl-[protein] + 2-oxoglutarate + O2 = (3S)-3-hydroxy-L-histidyl-[protein] + succinate + CO2. Its function is as follows. Oxygenase that can act as both a histone lysine demethylase and a ribosomal histidine hydroxylase. Specifically demethylates 'Lys-4' (H3K4me) and 'Lys-36' (H3K36me) of histone H3, thereby playing a central role in histone code. Preferentially demethylates trimethylated H3 'Lys-4' (H3K4me3) and monomethylated H3 'Lys-4' (H3K4me1) residues, while it has weaker activity for dimethylated H3 'Lys-36' (H3K36me2). Acts as a regulator of osteoblast differentiation via its interaction with SP7/OSX by demethylating H3K4me and H3K36me, thereby inhibiting SP7/OSX-mediated promoter activation. Also catalyzes demethylation of non-histone proteins, such as CGAS: demethylation of monomethylated CGAS promotes interaction between CGAS and PARP1, followed by PARP1 inactivation. Also catalyzes the hydroxylation of 60S ribosomal protein L8 on 'His-216', thereby playing a role in ribosome biogenesis. Participates in MYC-induced transcriptional activation. In Rattus norvegicus (Rat), this protein is Ribosomal oxygenase 1.